The sequence spans 469 residues: Protein RUFY3 (469 aa).

Thr-5 and Thr-12 each carry phosphothreonine. 2 positions are modified to phosphoserine: Ser-34 and Ser-49. Thr-51 is subject to Phosphothreonine. In terms of domain architecture, RUN spans 95-227; sequence DSDYAPLQQF…IDANFCMKGE (133 aa). 2 coiled-coil regions span residues 271–362 and 422–463; these read NRHL…VEKE and KSEL…AANK.

In terms of assembly, interacts with PAK1. Interacts (via C-terminus) with Ras-related Rab-5 proteins. Interacts (via C-terminus) with Ras-related Rap-2 proteins. Interacts with PIK3CA and PIK3R1. Interacts (via N-terminus) with FSCN1; this interaction induces neuron axon development. Interacts with DBN1. Interacts (via the second coiled coil) with GTP-, but not GDP-bound ARL8A and ARL8B. Interacts with dynactin/DCTN1 and the dynein intermediate chain DYNC1I1/2. Directly interacts with DYNC1LI1. Post-translationally, phosphorylated by PAK1. Isoform 1 is partially phosphorylated. In terms of tissue distribution, overexpressed in gastric cancer cells and tissues (at protein level).

It is found in the cytoplasm. The protein resides in the endomembrane system. Its subcellular location is the cell projection. It localises to the invadopodium. The protein localises to the perikaryon. It is found in the growth cone. The protein resides in the filopodium. Its subcellular location is the lamellipodium. It localises to the lysosome. ARL8 effector that promotes the coupling of endolysosomes to dynein-dynactin for retrograde transport along microtubules. Acts by binding both GTP-bound ARL8 and dynein-dynactin. In nonneuronal cells, promotes concentration of endolysosomes in the juxtanuclear area. In hippocampal neurons, drives retrograde transport of endolysosomes from the axon to the soma. Plays a role in the generation of neuronal polarity formation and axon growth. Implicated in the formation of a single axon by developing neurons. May inhibit the formation of additional axons by inhibition of PI3K in minor neuronal processes. Plays a role in the formation of F-actin-enriched protrusive structures at the cell periphery. Plays a role in cytoskeletal organization by regulating the subcellular localization of FSCN1 and DBN1 at axonal growth cones. The chain is Protein RUFY3 from Homo sapiens (Human).